Reading from the N-terminus, the 333-residue chain is MQQEALSFLSSSLPSLHHNFPSLSRLRFNNFPALSFKPNTSSSSSSFFKSPDIPSLSSTTTTTTTTETLESSIHEKLIYLDSLGIDFLTLINRHPPLLSTALSAVESVVDYMTTPPINFTLQDFRRLVSMCPELLTSPLTSHTIPVITFLLREVGVDSIFDLRQALRRRPRLLACSVDHQLRPTLYFLQRIGILDPHKHTYLLSCSVDNKLVPRIDYFEKLGFSRRSATAMFKRFPQLFNYSIAENYEPKLKYLMVEMGRDVREVLEFPQYFSFSLENRIKPRHEACAAKGVRFPLPVMLKTNEAGFRDTLEVCCDSSPPLKTSRLVTVQKDS.

The transit peptide at 1-55 (MQQEALSFLSSSLPSLHHNFPSLSRLRFNNFPALSFKPNTSSSSSSFFKSPDIPS) directs the protein to the chloroplast. Residues 38 to 67 (PNTSSSSSSFFKSPDIPSLSSTTTTTTTTE) form a disordered region.

It belongs to the mTERF family. As to quaternary structure, self-interacts. Associates with the plastid-encoded RNA polymerase (PEP) complex. Interacts directly with PTAC7/PAP12, PTAC12/HMR/PAP5 and PTAC14/PAP7. In terms of tissue distribution, expressed in green aerial tissues such as cotyledons, leaves, flowers and siliques, but not in roots.

The protein localises to the plastid. It localises to the chloroplast stroma. The protein resides in the chloroplast nucleoid. In terms of biological role, transcription termination factor required for chloroplast gene expression and protein synthesis in chloroplasts. Necessary for chloroplast photosynthetic complexes assembly by modulating the accumulation of photosynthetic proteins. Essential for embryogenesis. The sequence is that of Protein SEEDLING LETHAL 1, chloroplastic from Arabidopsis thaliana (Mouse-ear cress).